The sequence spans 429 residues: Adenylosuccinate synthetase (429 aa).

Residues 12 to 18 and 40 to 42 each bind GTP; these read GDEGKGK and GHT. Asp13 (proton acceptor) is an active-site residue. Residues Asp13 and Gly40 each contribute to the Mg(2+) site. IMP contacts are provided by residues 13–16, 38–41, Thr129, Arg143, Gln223, Thr238, and Arg302; these read DEGK and NAGH. Residue His41 is the Proton donor of the active site. A substrate-binding site is contributed by 298–304; sequence TVTGRPR. GTP is bound by residues Arg304, 330-332, and 412-414; these read KLD and STS.

This sequence belongs to the adenylosuccinate synthetase family. As to quaternary structure, homodimer. The cofactor is Mg(2+).

It is found in the cytoplasm. It carries out the reaction IMP + L-aspartate + GTP = N(6)-(1,2-dicarboxyethyl)-AMP + GDP + phosphate + 2 H(+). The protein operates within purine metabolism; AMP biosynthesis via de novo pathway; AMP from IMP: step 1/2. Functionally, plays an important role in the de novo pathway of purine nucleotide biosynthesis. Catalyzes the first committed step in the biosynthesis of AMP from IMP. The protein is Adenylosuccinate synthetase of Gluconobacter oxydans (strain 621H) (Gluconobacter suboxydans).